The primary structure comprises 403 residues: 26S proteasome regulatory subunit 8 homolog (403 aa).

186–193 (GPPGTGKT) is a binding site for ATP.

Belongs to the AAA ATPase family.

The protein resides in the cytoplasm. Its subcellular location is the nucleus. In terms of biological role, the 26S proteasome is involved in the ATP-dependent degradation of ubiquitinated proteins. The regulatory (or ATPase) complex confers ATP dependency and substrate specificity to the 26S complex. The protein is 26S proteasome regulatory subunit 8 homolog (let1) of Schizosaccharomyces pombe (strain 972 / ATCC 24843) (Fission yeast).